Consider the following 199-residue polypeptide: MTKVLVLYYSAYGHIEAMANAVAEGAREAGASVDIKRVPELVPAEVAKAAHFKLDQAAPVAKVEDLANYDAIIVGTGTRFGRMSSQMANFLDQAGGLWAKGALHGKVGGAFTSTATQHGGQEMTLFSIITNLLHFGMVVVGLNYGFAGQMGVKEVTGGAPYGATTITDGDGSRLPSENELNGARYQGRTIAETAKKLHG.

One can recognise a Flavodoxin-like domain in the interval Val-4 to Ile-190. Residues Ser-10–Ile-15 and Thr-78–Phe-80 each bind FMN. Tyr-12 provides a ligand contact to NAD(+). Trp-98 lines the substrate pocket. FMN-binding positions include Ser-113–Gly-119 and His-134.

The protein belongs to the WrbA family. The cofactor is FMN.

It carries out the reaction a quinone + NADH + H(+) = a quinol + NAD(+). The enzyme catalyses a quinone + NADPH + H(+) = a quinol + NADP(+). The polypeptide is NAD(P)H dehydrogenase (quinone) (Afipia carboxidovorans (strain ATCC 49405 / DSM 1227 / KCTC 32145 / OM5) (Oligotropha carboxidovorans)).